The following is a 253-amino-acid chain: Major prion protein (253 aa).

The first 22 residues, 1-22 (MANLGCWMLVLFVATWSDLGLC), serve as a signal peptide directing secretion. An interaction with ADGRG6 region spans residues 23–38 (KKRPKPGGWNTGGSRY). Residues 23–230 (KKRPKPGGWN…ESQAYYQRGS (208 aa)) are interaction with GRB2, ERI3 and SYN1. The interval 26 to 108 (PKPGGWNTGG…WNKPSKPKTN (83 aa)) is disordered. Repeat copies occupy residues 51–59 (PQGGGGWGQ), 60–67 (PHGGGWGQ), 68–75 (PHGGGWGQ), 76–83 (PHGGGWGQ), and 84–91 (PHGGGWGQ). A 5 X 8 AA tandem repeats of P-H-G-G-G-W-G-Q region spans residues 51-91 (PQGGGGWGQPHGGGWGQPHGGGWGQPHGGGWGQPHGGGWGQ). Positions 52 to 95 (QGGGGWGQPHGGGWGQPHGGGWGQPHGGGWGQPHGGGWGQGGGT) are enriched in gly residues. Cu(2+) is bound by residues H61, G62, G63, H69, G70, G71, H77, G78, G79, H85, G86, and G87. Residues C179 and C214 are joined by a disulfide bond. N-linked (GlcNAc...) asparagine glycosylation is found at N181 and N197. The GPI-anchor amidated serine moiety is linked to residue S230. The propeptide at 231 to 253 (SMVLFSSPPVILLISFLIFLIVG) is removed in mature form.

This sequence belongs to the prion family. In terms of assembly, monomer and homodimer. Has a tendency to aggregate into amyloid fibrils containing a cross-beta spine, formed by a steric zipper of superposed beta-strands. Soluble oligomers may represent an intermediate stage on the path to fibril formation. Copper binding may promote oligomerization. Interacts with GRB2, APP, ERI3/PRNPIP and SYN1. Mislocalized cytosolically exposed PrP interacts with MGRN1; this interaction alters MGRN1 subcellular location and causes lysosomal enlargement. Interacts with APP. Interacts with KIAA1191. Interacts with ADGRG6.

The protein resides in the cell membrane. Its subcellular location is the golgi apparatus. Its function is as follows. Its primary physiological function is unclear. May play a role in neuronal development and synaptic plasticity. May be required for neuronal myelin sheath maintenance. May promote myelin homeostasis through acting as an agonist for ADGRG6 receptor. May play a role in iron uptake and iron homeostasis. Soluble oligomers are toxic to cultured neuroblastoma cells and induce apoptosis (in vitro). Association with GPC1 (via its heparan sulfate chains) targets PRNP to lipid rafts. Also provides Cu(2+) or Zn(2+) for the ascorbate-mediated GPC1 deaminase degradation of its heparan sulfate side chains. The protein is Major prion protein (PRNP) of Gorilla gorilla gorilla (Western lowland gorilla).